The primary structure comprises 93 residues: C-C motif chemokine 14 (93 aa).

Residues 1 to 19 (MKISVAAIPFFLLITIALG) form the signal peptide. Residue Ser26 is glycosylated (O-linked (GalNAc...) serine; partial). Disulfide bonds link Cys35-Cys59 and Cys36-Cys75.

The protein belongs to the intercrine beta (chemokine CC) family. The N-terminal processed forms HCC-1(3-74), HCC-1(4-74) and HCC-1(9-74) are produced in small amounts by proteolytic cleavage after secretion in blood. Post-translationally, HCC-1(1-74), but not HCC-1(3-74) and HCC-1(4-74), is partially O-glycosylated; the O-linked glycan consists of one Gal-GalNAc disaccharide, further modified by two N-acetylneuraminic acids. In terms of tissue distribution, expressed constitutively in several normal tissues: spleen, liver, skeletal and heart muscle, gut, and bone marrow, present at high concentrations (1-80 nM) in plasma.

The protein resides in the secreted. Functionally, has weak activities on human monocytes and acts via receptors that also recognize MIP-1 alpha. It induces intracellular Ca(2+) changes and enzyme release, but no chemotaxis, at concentrations of 100-1,000 nM, and is inactive on T-lymphocytes, neutrophils, and eosinophil leukocytes. Enhances the proliferation of CD34 myeloid progenitor cells. The processed form HCC-1(9-74) is a chemotactic factor that attracts monocytes, eosinophils, and T-cells and is a ligand for CCR1, CCR3 and CCR5. The protein is C-C motif chemokine 14 (CCL14) of Homo sapiens (Human).